The following is a 525-amino-acid chain: MLEKRHGDHHNANIKYGTFVLVISLLVVCYIAVRNLTQPEVRARTKRDLRLPLWLSVLLWTALVIGMGVIHVEELNEAAKRFGRLCYALLPLIVFLAIRPSPLPRTFYLKLLPLHKWLGRLATLVGVVHGVLYTVHFVKKNEFYKVFKFDNFLGVIILAVFLVMVVTSLPFFRKRMYSLFYTIHYLSAWFVAIATIFHARPGVGWLFFWVALFMGSSLLYRVLASSTVQIESTEAMGPDLHRVTFPRSILPEFFVPASHIRVSRTLRNPLSWISSTHPYTISSLPSDDHVELIVRPTKFSLAHAASGTQFAVYGPFESLPDDFFSTANRVLVFAGGAGISFALPVVQTLAKAGISHKLVWVLRNKAGVSEVESRLGETPTDIYITGQDPFLGEGVVYAKDAEGTAGLLSEDMEMEEIGQEDEDRERDELDDLLSEDEGSSSQDSTKGAHKNKGKDQDNGKREASQSITYHDGRPQPADTASAYFLDRSAPEGKWILACGPNGLVVTAEQAAKKTGVRFCNETYSM.

The next 7 helical transmembrane spans lie at 13–33, 52–72, 82–102, 118–138, 152–172, 179–199, and 203–223; these read NIKYGTFVLVISLLVVCYIAV, PLWLSVLLWTALVIGMGVIHV, FGRLCYALLPLIVFLAIRPSP, LGRLATLVGVVHGVLYTVHFV, FLGVIILAVFLVMVVTSLPFF, LFYTIHYLSAWFVAIATIFHA, and VGWLFFWVALFMGSSLLYRVL. The Ferric oxidoreductase domain occupies 82-194; that stretch reads FGRLCYALLP…YLSAWFVAIA (113 aa). The FAD-binding FR-type domain occupies 215-344; that stretch reads GSSLLYRVLA…GGAGISFALP (130 aa). A disordered region spans residues 407–478; sequence LLSEDMEMEE…YHDGRPQPAD (72 aa). The segment covering 410–438 has biased composition (acidic residues); that stretch reads EDMEMEEIGQEDEDRERDELDDLLSEDEG. Residues 453–463 are compositionally biased toward basic and acidic residues; it reads GKDQDNGKREA.

This sequence belongs to the ferric reductase (FRE) family. AIM14 subfamily.

The protein resides in the membrane. Functionally, probable cell surface metalloreductase. May be involved in iron or copper homeostasis. In Yarrowia lipolytica (strain CLIB 122 / E 150) (Yeast), this protein is Probable metalloreductase AIM14 (AIM14).